A 274-amino-acid chain; its full sequence is Thiamine kinase (274 aa).

This sequence belongs to the thiamine kinase family.

It catalyses the reaction thiamine + ATP = thiamine phosphate + ADP + H(+). Its pathway is cofactor biosynthesis; thiamine diphosphate biosynthesis; thiamine phosphate from thiamine: step 1/1. Its function is as follows. Catalyzes the ATP-dependent phosphorylation of thiamine to thiamine phosphate. Is involved in thiamine salvage. This is Thiamine kinase from Salmonella dublin (strain CT_02021853).